The following is a 384-amino-acid chain: MMINPLIYLHYNYTGKLDHRPTVGTSPGTRDPKTIAFLVVCSFIILENLTVLLAIWKNHRFHNRMYFFIGNLALCDLLASVAYLVNLLLSGEKTLQLSPVLWFVREGSMFVTLGASIFSLLAIAIERHLTMIKMRPYDASKNYRVFLLIGTCWLVAVLLGALPILGWNCLGNLPDCSTILPLYTKKYVAFCIIVFIVLLLAMSVLYARIYILVKSSSQKVSKHRNSEHAMSLLRTVIIVVGVFIACWMPIFVLLLLDVACERPCPILYKADWFIAVAVLNSAMNPIIYTLASREMRRAFLGLVCGVCYRGNGSGNDSGNKQFQEPSRSRSKSWSSQTHPNQSQQSSRPAELDREQETGHGEISVVAGGAAQASQREGEGGNGGR.

Residues 1–34 (MMINPLIYLHYNYTGKLDHRPTVGTSPGTRDPKT) are Extracellular-facing. Asn12 carries N-linked (GlcNAc...) asparagine glycosylation. The helical transmembrane segment at 35 to 55 (IAFLVVCSFIILENLTVLLAI) threads the bilayer. The Cytoplasmic portion of the chain corresponds to 56–64 (WKNHRFHNR). A helical membrane pass occupies residues 65 to 85 (MYFFIGNLALCDLLASVAYLV). The Extracellular portion of the chain corresponds to 86-105 (NLLLSGEKTLQLSPVLWFVR). The helical transmembrane segment at 106-126 (EGSMFVTLGASIFSLLAIAIE) threads the bilayer. Over 127–144 (RHLTMIKMRPYDASKNYR) the chain is Cytoplasmic. The chain crosses the membrane as a helical span at residues 145–165 (VFLLIGTCWLVAVLLGALPIL). Residues 166–186 (GWNCLGNLPDCSTILPLYTKK) lie on the Extracellular side of the membrane. A helical membrane pass occupies residues 187–207 (YVAFCIIVFIVLLLAMSVLYA). Residues 208–235 (RIYILVKSSSQKVSKHRNSEHAMSLLRT) lie on the Cytoplasmic side of the membrane. The helical transmembrane segment at 236 to 256 (VIIVVGVFIACWMPIFVLLLL) threads the bilayer. Over 257–271 (DVACERPCPILYKAD) the chain is Extracellular. The chain crosses the membrane as a helical span at residues 272–292 (WFIAVAVLNSAMNPIIYTLAS). The Cytoplasmic segment spans residues 293 to 384 (REMRRAFLGL…REGEGGNGGR (92 aa)). 2 stretches are compositionally biased toward polar residues: residues 315 to 325 (NDSGNKQFQEP) and 336 to 347 (QTHPNQSQQSSR). Residues 315 to 384 (NDSGNKQFQE…REGEGGNGGR (70 aa)) are disordered. A compositionally biased stretch (basic and acidic residues) spans 349–359 (AELDREQETGH).

This sequence belongs to the G-protein coupled receptor 1 family.

The protein localises to the cell membrane. Its function is as follows. Receptor for the lysosphingolipid sphingosine 1-phosphate (S1P). The chain is Sphingosine 1-phosphate receptor 3 (s1pr3) from Takifugu rubripes (Japanese pufferfish).